We begin with the raw amino-acid sequence, 312 residues long: MQCSDVQATEPDIKVSLTRVGVTNLKKLVKIKRKSKRDIVLLPTFEVYVDLPSSQKGIHMSRSPEVIEEVVENIIVEKEIYGVEELSVEIVMKLFEKHEYATRAEVMLYSDYMMEEKSPVTKKDSQEVGKIMARAYGVKDDSGMISVKKMVGAEVVGITACPCAQNLLKENAINKLIEKGFSNEDIEKILDSVTIATHNQRGIGTIMIEVPNGYTVGISKIIKIIKESMSGEVYELLKRSDEAYVVELAHKNPKFVEDCAREMIKRVVEVFDYLPEDTQVIVRQVNKESIHRHDAFAERKSKMGELRDELEI.

It belongs to the GTP cyclohydrolase IV family. As to quaternary structure, homodimer. It depends on Fe(2+) as a cofactor.

The catalysed reaction is GTP + H2O = 7,8-dihydroneopterin 2',3'-cyclic phosphate + formate + diphosphate + H(+). It participates in cofactor biosynthesis; 5,6,7,8-tetrahydromethanopterin biosynthesis. Converts GTP to 7,8-dihydro-D-neopterin 2',3'-cyclic phosphate, the first intermediate in the biosynthesis of coenzyme methanopterin. This chain is GTP cyclohydrolase MptA, found in Methanococcus vannielii (strain ATCC 35089 / DSM 1224 / JCM 13029 / OCM 148 / SB).